The primary structure comprises 123 residues: MKKSGLLNPDLCYAIARLGHTDTWAVADCGLPIPEHVEIIDLALVFGIPTFEQVLNALKPEVVVEGAVIAEGAPERIREMVDTDVEVVTHEELKAQLAECAFVIRTGETTAYANVIFKSGVAF.

Residue histidine 20 is the Proton donor of the active site. Substrate contacts are provided by residues aspartate 28, histidine 90, and 112–114 (YAN).

The protein belongs to the RbsD / FucU family. RbsD subfamily. As to quaternary structure, homodecamer.

It localises to the cytoplasm. The enzyme catalyses beta-D-ribopyranose = beta-D-ribofuranose. Its pathway is carbohydrate metabolism; D-ribose degradation; D-ribose 5-phosphate from beta-D-ribopyranose: step 1/2. Its function is as follows. Catalyzes the interconversion of beta-pyran and beta-furan forms of D-ribose. In Corynebacterium glutamicum (strain ATCC 13032 / DSM 20300 / JCM 1318 / BCRC 11384 / CCUG 27702 / LMG 3730 / NBRC 12168 / NCIMB 10025 / NRRL B-2784 / 534), this protein is D-ribose pyranase.